An 897-amino-acid chain; its full sequence is High molecular weight rhoptry protein 3 (897 aa).

A signal peptide spans 1 to 24 (MRSKHLVTLFIITFLSFSTVKVWG). 5 disulfides stabilise this stretch: cysteine 157–cysteine 231, cysteine 244–cysteine 253, cysteine 262–cysteine 276, cysteine 421–cysteine 620, and cysteine 475–cysteine 536. The helical transmembrane segment at 597–615 (FVLYFISIISVLYINEYYY) threads the bilayer. Disordered regions lie at residues 788-845 (KEQS…SNLK) and 859-897 (QLDK…ENEL). The span at 792 to 801 (KSTSAASTSD) shows a compositional bias: polar residues. Residues 802–817 (EISGSEGPSTESTSTG) show a composition bias toward low complexity. Serine 804 is subject to Phosphoserine; by CDPK1. Residues 820–832 (GEDKTTDNTYKEM) are compositionally biased toward basic and acidic residues. A compositionally biased stretch (basic residues) spans 865–876 (PKKKKSKRKKKR). A compositionally biased stretch (basic and acidic residues) spans 877–889 (DSSSDRILLEESK).

As to quaternary structure, component of the RhopH complex. RhopH complex is composed of CLAG3.1/CLAG3.2, RhopH2 and RhopH3 with a 1:1:1 subunit stoichiometry. Interacts with CLAG3.1/CLAG3.2. Interacts with CDPK1; the interaction promotes RhopH3 phosphorylation in merozoites. Post-translationally, proteolytically cleaved near C-terminus.

The protein localises to the host cell membrane. The protein resides in the parasitophorous vacuole membrane. It localises to the cytoplasm. It is found in the cytoplasmic vesicle. Its subcellular location is the secretory vesicle. The protein localises to the rhoptry. In terms of biological role, participates in the formation of new permeability pathways in Plasmodium-infected erythrocytes enabling the uptake of nutrients from the blood plasma. Required for maintaining invasion capacity of merozoites. Required for the trophozoite to schizont developmental transition of the intracellular parasite. In Plasmodium falciparum (isolate 3D7), this protein is High molecular weight rhoptry protein 3.